Here is a 134-residue protein sequence, read N- to C-terminus: Estradiol 17-beta-dehydrogenase 8 (134 aa).

Substrate is bound at residue Ser-38. Lys-42 carries the post-translational modification N6-succinyllysine. The active-site Proton acceptor is Tyr-51. NAD(+) is bound by residues 51-55 (YAASK) and 84-86 (IAT). At Lys-55 the chain carries N6-succinyllysine.

The protein belongs to the short-chain dehydrogenases/reductases (SDR) family. Heterotetramer with CBR4; contains two molecules of HSD17B8 and CBR4.

It is found in the mitochondrion matrix. It carries out the reaction 17beta-estradiol + NAD(+) = estrone + NADH + H(+). The catalysed reaction is 17beta-estradiol + NADP(+) = estrone + NADPH + H(+). The enzyme catalyses testosterone + NAD(+) = androst-4-ene-3,17-dione + NADH + H(+). It participates in steroid biosynthesis; estrogen biosynthesis. The protein operates within lipid metabolism; fatty acid biosynthesis. Functionally, NAD-dependent 17-beta-hydroxysteroid dehydrogenase with highest activity towards estradiol. Has very low activity towards testosterone. The heterotetramer with CBR4 has NADH-dependent 3-ketoacyl-acyl carrier protein reductase activity, and thereby plays a role in mitochondrial fatty acid biosynthesis. Within the heterotetramer, HSD17B8 binds NADH; CBR4 binds NADPD. This Callithrix jacchus (White-tufted-ear marmoset) protein is Estradiol 17-beta-dehydrogenase 8 (HSD17B8).